Reading from the N-terminus, the 38-residue chain is Photosystem II reaction center protein L (38 aa).

A helical membrane pass occupies residues 17-37; it reads SLYWGLLLIFVLAVLFSNYFF.

The protein belongs to the PsbL family. In terms of assembly, PSII is composed of 1 copy each of membrane proteins PsbA, PsbB, PsbC, PsbD, PsbE, PsbF, PsbH, PsbI, PsbJ, PsbK, PsbL, PsbM, PsbT, PsbX, PsbY, PsbZ, Psb30/Ycf12, at least 3 peripheral proteins of the oxygen-evolving complex and a large number of cofactors. It forms dimeric complexes.

It localises to the plastid. The protein localises to the chloroplast thylakoid membrane. Its function is as follows. One of the components of the core complex of photosystem II (PSII). PSII is a light-driven water:plastoquinone oxidoreductase that uses light energy to abstract electrons from H(2)O, generating O(2) and a proton gradient subsequently used for ATP formation. It consists of a core antenna complex that captures photons, and an electron transfer chain that converts photonic excitation into a charge separation. This subunit is found at the monomer-monomer interface and is required for correct PSII assembly and/or dimerization. This Adiantum capillus-veneris (Maidenhair fern) protein is Photosystem II reaction center protein L.